A 456-amino-acid chain; its full sequence is Probable multidrug resistance protein NorM (456 aa).

12 helical membrane passes run 13-34, 54-76, 95-117, 132-154, 161-183, 193-215, 244-266, 286-308, 321-343, 358-380, 387-409, and 414-436; these read QFLTIFTPIVITQLTLFSMTFF, SSFWAPVNAAFSGLLMAITPIIA, LYIALFLAFILILINFLVVPTIL, HFLNGICIGIPAFFISAILRSFI, RVTMLITLCTVPFNIFLNYCFIF, GAGSGYATGITYWLVVLVSVILI, IGVPNGLTILFETSIFSAVTILM, LLYAFPLSVASTLTILGGYETGA, GMAAAIFIGCVNGAILFFFRDII, MHFLVYAILFQFADAVLSPVLGA, VTVTSIVAFISYWLIGLPVGYGL, and LGPFGYWIGLSTGLFVAAFILSI.

Belongs to the multi antimicrobial extrusion (MATE) (TC 2.A.66.1) family.

It is found in the cell membrane. Multidrug efflux pump. This Listeria monocytogenes serotype 4b (strain F2365) protein is Probable multidrug resistance protein NorM (norM).